The following is a 116-amino-acid chain: Large ribosomal subunit protein bL19 (116 aa).

It belongs to the bacterial ribosomal protein bL19 family.

Functionally, this protein is located at the 30S-50S ribosomal subunit interface and may play a role in the structure and function of the aminoacyl-tRNA binding site. The chain is Large ribosomal subunit protein bL19 from Fusobacterium nucleatum subsp. nucleatum (strain ATCC 25586 / DSM 15643 / BCRC 10681 / CIP 101130 / JCM 8532 / KCTC 2640 / LMG 13131 / VPI 4355).